Reading from the N-terminus, the 334-residue chain is MTFAVSVGGRRVDCEPGQTLLEAFLRGGVWMPNSCNQGTCGTCKLQVLSGEVDHGGAPEDTLSAEERASGLALACQARPLADTEVRSTADAGRVTHPLRDLTATVLEVADIARDTRRVLLGLAEPLAFEAGQYVELVVPGSGARRQYSLANTADEDKVLELHVRRVPGGVATDGWLFDGLAAGDRVEATGPLGDFHLPPPDEDDGGPMVLIGGGTGLAPLVGIARTALARHPSREVLLYHGVRGAADLYDLGRFAEIAEEHPGFRFVPVLSDEPDPAYRGGFPTDAFVEDVPSGRGWSGWLCGPPAMVEAGVKAFKRRRMSPRRIHREKFTPAS.

Positions 1 to 91 (MTFAVSVGGR…DTEVRSTADA (91 aa)) constitute a 2Fe-2S ferredoxin-type domain. The [2Fe-2S] cluster site is built by Cys-35, Cys-40, Cys-43, and Cys-75. Residues 98 to 198 (LRDLTATVLE…TGPLGDFHLP (101 aa)) enclose the FAD-binding FR-type domain. Residues 145-148 (RQYS), 162-164 (HVR), 170-172 (VAT), Thr-215, Phe-330, and Ser-334 contribute to the FAD site.

In terms of assembly, monomer. Forms a heterodimer with GcoA. FAD serves as cofactor. Requires [2Fe-2S] cluster as cofactor.

The enzyme catalyses 2 oxidized [cytochrome P450] + NADH = 2 reduced [cytochrome P450] + NAD(+) + H(+). It functions in the pathway aromatic compound metabolism. In terms of biological role, part of a two-component P450 system that efficiently O-demethylates diverse aromatic substrates such as guaiacol and a wide variety of lignin-derived monomers. Is likely involved in lignin degradation, allowing Amycolatopsis sp. ATCC 39116 to catabolize plant biomass. GcoB transfers electrons from NADH to the cytochrome P450 subunit GcoA. Highly prefers NADH over NADPH as the electron donor. The protein is Aromatic O-demethylase, reductase subunit of Amycolatopsis sp. (strain ATCC 39116 / 75iv2).